The chain runs to 690 residues: MARSHPLERYRNFGIMAHIDAGKTTTTERILYYTGKSYKIGEVHEGAATMDWMEQEQERGITITSAATTCFWNDHRLNIIDTPGHVDFTIEVERSLRVLDGAVAAFDGVAGVEPQSETVWRQADKYGVPRMCYINKLDRTGANFYYCVQTIIDRLGAKPAVLYLPIGAESEFKGLVDLINERAIIWKDESLGAEFFYEDIPADMADKAAEYREKLIELAVEQDDAAMEAYLEGTMPDAATLKALLRKGTLAHAFVPVLCGSSFKNKGVQALLDAVVDFMPSPLDIEDVQGINPDTDEPDSRATSDDAPFSALAFKIMNDPFVGSLTFTRIYSGTLSKGSYLNSVKNKKEKVGRMLLMHANSREDIEEAYAGDIVALAGLKETTTGDTLCSEKQPIILERMEFPEPVIELSVEPKTKADQEKMGIALNRLAAEDPSFRVSTDHESGQTIIKGMGELHLEILVDRMKREFKVEANVGAPQVAYREYLAKAIDLDHTHKKQSGGTGQFGRVKVKVTPGERGSGFVFKDEIKGGNIPKEYIPAIEKGFRETAATGSLIGFPIIDFEVLLYDGAYHDVDSSALAFEICARGAMREAAQKAGIKLLEPIMKVEVITPDEYLGDVIGDINSRRGQIQGTDTRGNAQAVTAMVPLANMFGYVNQLRSFTQGRANYSMFFDHYDEVPANVATELKAKLA.

Positions 8-283 constitute a tr-type G domain; it reads ERYRNFGIMA…AVVDFMPSPL (276 aa). GTP is bound by residues 17–24, 81–85, and 135–138; these read AHIDAGKT, DTPGH, and NKLD.

It belongs to the TRAFAC class translation factor GTPase superfamily. Classic translation factor GTPase family. EF-G/EF-2 subfamily.

The protein resides in the cytoplasm. Functionally, catalyzes the GTP-dependent ribosomal translocation step during translation elongation. During this step, the ribosome changes from the pre-translocational (PRE) to the post-translocational (POST) state as the newly formed A-site-bound peptidyl-tRNA and P-site-bound deacylated tRNA move to the P and E sites, respectively. Catalyzes the coordinated movement of the two tRNA molecules, the mRNA and conformational changes in the ribosome. This Novosphingobium aromaticivorans (strain ATCC 700278 / DSM 12444 / CCUG 56034 / CIP 105152 / NBRC 16084 / F199) protein is Elongation factor G.